Consider the following 874-residue polypeptide: Alanine--tRNA ligase (874 aa).

Zn(2+) contacts are provided by histidine 564, histidine 568, cysteine 665, and histidine 669.

Belongs to the class-II aminoacyl-tRNA synthetase family. Zn(2+) serves as cofactor.

The protein localises to the cytoplasm. It catalyses the reaction tRNA(Ala) + L-alanine + ATP = L-alanyl-tRNA(Ala) + AMP + diphosphate. Its function is as follows. Catalyzes the attachment of alanine to tRNA(Ala) in a two-step reaction: alanine is first activated by ATP to form Ala-AMP and then transferred to the acceptor end of tRNA(Ala). Also edits incorrectly charged Ser-tRNA(Ala) and Gly-tRNA(Ala) via its editing domain. The polypeptide is Alanine--tRNA ligase (Delftia acidovorans (strain DSM 14801 / SPH-1)).